Consider the following 371-residue polypeptide: Glutamate 5-kinase (371 aa).

Lys11 lines the ATP pocket. Residues Ser52, Asp139, and Asn151 each contribute to the substrate site. ATP is bound by residues 171–172 (TD) and 213–219 (TGGMATK). The 79-residue stretch at 278–356 (EGSLTLDEGA…AEIPYILGYE (79 aa)) folds into the PUA domain.

This sequence belongs to the glutamate 5-kinase family.

The protein resides in the cytoplasm. The enzyme catalyses L-glutamate + ATP = L-glutamyl 5-phosphate + ADP. It participates in amino-acid biosynthesis; L-proline biosynthesis; L-glutamate 5-semialdehyde from L-glutamate: step 1/2. In terms of biological role, catalyzes the transfer of a phosphate group to glutamate to form L-glutamate 5-phosphate. This chain is Glutamate 5-kinase, found in Synechococcus sp. (strain JA-3-3Ab) (Cyanobacteria bacterium Yellowstone A-Prime).